Here is a 67-residue protein sequence, read N- to C-terminus: DNA-directed RNA polymerase subunit omega (67 aa).

Belongs to the RNA polymerase subunit omega family. As to quaternary structure, RNAP is composed of a core of 2 alpha, a beta and a beta' subunit. The core is associated with a delta subunit, and at least one of epsilon or omega. When a sigma factor is associated with the core the holoenzyme is formed, which can initiate transcription.

The enzyme catalyses RNA(n) + a ribonucleoside 5'-triphosphate = RNA(n+1) + diphosphate. Its function is as follows. Promotes RNA polymerase assembly. Latches the N- and C-terminal regions of the beta' subunit thereby facilitating its interaction with the beta and alpha subunits. In vitro reconstitution experiments this subunit is dispensible. This Bacillus subtilis (strain 168) protein is DNA-directed RNA polymerase subunit omega (rpoZ).